Reading from the N-terminus, the 176-residue chain is CASP-like protein 5A1 (176 aa).

Topologically, residues 1-45 (MDASHPAVYPVGVPPTAVDPPPRVRMKDYEGMPSTLGGLVLRSGQ) are cytoplasmic. The chain crosses the membrane as a helical span at residues 46–66 (FACAVTALSIMISIPDFSSVT). Residue Ala-67 is a topological domain, extracellular. A helical transmembrane segment spans residues 68 to 88 (FCYLVAAMALQLLWSVSLAVV). Residues 89–102 (DGYALLLRRTLHNP) lie on the Cytoplasmic side of the membrane. A helical membrane pass occupies residues 103–123 (VLLSLLVIGDWVTSTLSLAAA). The Extracellular segment spans residues 124 to 151 (CSSAGITVLIDSDLAQCAHNHCGRYEAA). Residues 152 to 172 (VAMAFLTWFLVSLSFFFSFWL) traverse the membrane as a helical segment. At 173–176 (LATR) the chain is on the cytoplasmic side.

This sequence belongs to the Casparian strip membrane proteins (CASP) family. As to quaternary structure, homodimer and heterodimers.

It localises to the cell membrane. This is CASP-like protein 5A1 from Selaginella moellendorffii (Spikemoss).